The sequence spans 263 residues: tRNA (guanine-N(7)-)-methyltransferase (263 aa).

A compositionally biased stretch (polar residues) spans 1-10 (MLPQDPSTEP). Residues 1 to 38 (MLPQDPSTEPTPADDAAPVDSAGQASAPSPADPEGVAH) form a disordered region. Glu-91, Glu-116, Asp-143, and Asp-166 together coordinate S-adenosyl-L-methionine. Asp-166 is a catalytic residue. Lys-170 is a substrate binding site. The interaction with RNA stretch occupies residues 172-177 (RHNKRR). Residues Asp-202 and 240-243 (TKFE) each bind substrate.

The protein belongs to the class I-like SAM-binding methyltransferase superfamily. TrmB family.

It carries out the reaction guanosine(46) in tRNA + S-adenosyl-L-methionine = N(7)-methylguanosine(46) in tRNA + S-adenosyl-L-homocysteine. It participates in tRNA modification; N(7)-methylguanine-tRNA biosynthesis. In terms of biological role, catalyzes the formation of N(7)-methylguanine at position 46 (m7G46) in tRNA. This chain is tRNA (guanine-N(7)-)-methyltransferase, found in Cupriavidus necator (strain ATCC 17699 / DSM 428 / KCTC 22496 / NCIMB 10442 / H16 / Stanier 337) (Ralstonia eutropha).